We begin with the raw amino-acid sequence, 564 residues long: 60 kDa lysophospholipase (564 aa).

One can recognise an Asparaginase/glutaminase domain in the interval 9–355 (RRLLAIYTGG…NDRKKLLAKD (347 aa)). Catalysis depends on Thr-19, which acts as the Acyl-ester intermediate. Residues 41 to 350 (TLHMFHDEEY…PGLSLNDRKK (310 aa)) are asparaginase. Substrate-binding positions include 84-86 (DSS) and 116-117 (TD). ANK repeat units lie at residues 141 to 170 (GAQV…YVIP), 396 to 426 (VLLP…DLNL), 430 to 459 (SGQT…DVDA), 463 to 492 (DGQS…RLSP), and 530 to 559 (DGHC…SVCA). Ser-478 is modified (phosphoserine).

The protein in the N-terminal section; belongs to the asparaginase 1 family. Monomer.

It carries out the reaction a 1-acyl-sn-glycero-3-phosphocholine + H2O = sn-glycerol 3-phosphocholine + a fatty acid + H(+). The catalysed reaction is L-asparagine + H2O = L-aspartate + NH4(+). The enzyme catalyses a 1-O-alkyl-2-acetyl-sn-glycero-3-phosphocholine + H2O = a 1-O-alkyl-sn-glycero-3-phosphocholine + acetate + H(+). It catalyses the reaction 1-hexadecanoyl-sn-glycero-3-phosphocholine + H2O = sn-glycerol 3-phosphocholine + hexadecanoate + H(+). It carries out the reaction 2 1-hexadecanoyl-sn-glycero-3-phosphocholine = 1,2-dihexadecanoyl-sn-glycero-3-phosphocholine + sn-glycerol 3-phosphocholine. The catalysed reaction is 1-octadecanoyl-sn-glycero-3-phosphocholine + H2O = octadecanoate + sn-glycerol 3-phosphocholine + H(+). The enzyme catalyses 1-(9Z-octadecenoyl)-sn-glycero-3-phosphocholine + H2O = sn-glycerol 3-phosphocholine + (9Z)-octadecenoate + H(+). It catalyses the reaction 1-hexadecanoyl-sn-glycero-3-phosphoethanolamine + H2O = sn-glycero-3-phosphoethanolamine + hexadecanoate + H(+). It carries out the reaction 1-(9Z-octadecenoyl)-sn-glycero-3-phosphoethanolamine + H2O = sn-glycero-3-phosphoethanolamine + (9Z)-octadecenoate + H(+). The catalysed reaction is 1-hexadecanoyl-sn-glycero-3-phosphoethanolamine + 1-hexadecanoyl-sn-glycero-3-phosphocholine = 1,2-dihexadecanoyl-sn-glycero-3-phosphoethanolamine + sn-glycerol 3-phosphocholine. The enzyme catalyses 2-(5Z,8Z,11Z,14Z)-eicosatetraenoyl-sn-glycero-3-phosphocholine + H2O = sn-glycerol 3-phosphocholine + (5Z,8Z,11Z,14Z)-eicosatetraenoate + H(+). It catalyses the reaction 2-hexadecanoyl-sn-glycero-3-phosphocholine + H2O = sn-glycerol 3-phosphocholine + hexadecanoate + H(+). It carries out the reaction 2 2-hexadecanoyl-sn-glycero-3-phosphocholine = 1,2-dihexadecanoyl-sn-glycero-3-phosphocholine + sn-glycerol 3-phosphocholine. The catalysed reaction is 1-O-(9Z)-octadecenoyl-2-O-acetyl-sn-glycero-3-phosphocholine + H2O = 2-acetyl-sn-glycero-3-phosphocholine + (9Z)-octadecenoate + H(+). The enzyme catalyses a 1-acyl-sn-glycero-3-phospho-(1D-myo-inositol) + 1-hexadecanoyl-sn-glycero-3-phosphocholine = a 1-acyl-2-hexadecanoyl-sn-glycero-3-phospho-(1D-myo-inositol) + sn-glycerol 3-phosphocholine. It catalyses the reaction 2 2-(5Z,8Z,11Z,14Z)-eicosatetraenoyl-sn-glycero-3-phosphocholine = 1,2-di-(5Z,8Z,11Z,14Z-eicosatetraenoyl)-sn-glycero-3-phosphocholine + sn-glycerol 3-phosphocholine. Functionally, exhibits lysophospholipase, transacylase, PAF acetylhydrolase and asparaginase activities. Can catalyze three types of transacylation reactions: (1) acyl transfer from 1-acyl-sn-glycero-3-phosphocholine (1-acyl-GPC) to the sn-1(3) positions of glycerol and 2-acylglycerol (sn-1 to -1(3) transfer), (2) acyl transfer from 1-acyl-GPC to the sn-2 positions of 1-acyl-GPC, 1-acyl-sn-glycero-3-phosphoethanolamine (1-acyl-GPE), and other lysophospholipids (sn-1 to -2 transfer) and (3) acyl transfer from 2-acyl-GPC to the sn-1 position of 2-acyl-GPC and 2-acyl-GPE (sn-2 to -1 transfer). Mediates the synthesis of 1-arachidonoyl species of phospholipids by transferring the arachidonoyl residue from 2-arachidonoyl lysophospholipid to the sn-1 position of 2-acyl lysophospholipid. The sequence is that of 60 kDa lysophospholipase (Aspg) from Mus musculus (Mouse).